The following is a 469-amino-acid chain: Argininosuccinate lyase (469 aa).

Belongs to the lyase 1 family. Argininosuccinate lyase subfamily.

It is found in the cytoplasm. The enzyme catalyses 2-(N(omega)-L-arginino)succinate = fumarate + L-arginine. Its pathway is amino-acid biosynthesis; L-arginine biosynthesis; L-arginine from L-ornithine and carbamoyl phosphate: step 3/3. The sequence is that of Argininosuccinate lyase from Burkholderia orbicola (strain MC0-3).